Consider the following 707-residue polypeptide: Serine/threonine protein kinase UL97 (707 aa).

Residues 1–14 are compositionally biased toward low complexity; that stretch reads MSSALRSRARSASL. 4 disordered regions span residues 1–33, 113–146, 176–198, and 231–264; these read MSSA…SRAR, DGEK…GDGY, FTGG…RPLR, and ESQD…EADS. A compositionally biased stretch (basic and acidic residues) spans 113–127; sequence DGEKEDAASDKENLR. The segment covering 178-188 has biased composition (low complexity); the sequence is GGSDPSDSVSG. Residues 337–345 and lysine 359 contribute to the ATP site; that span reads LGQGSFGEV. The active-site Proton acceptor is aspartate 456.

This sequence belongs to the protein kinase superfamily. Tyr protein kinase family. HCMV ganciclovir subfamily. Interacts with UL83. Post-translationally, autophosphorylates on serine and threonine residues.

It is found in the virion. It catalyses the reaction L-seryl-[protein] + ATP = O-phospho-L-seryl-[protein] + ADP + H(+). It carries out the reaction L-threonyl-[protein] + ATP = O-phospho-L-threonyl-[protein] + ADP + H(+). In terms of biological role, serine/threonine protein kinase that plays important roles in several processes including nuclear viral egress, viral replication or regulation of host cell cycle progression. Participates in the acquisition of tegument during virion morphogenesis in the nucleus. Phosphorylates the viral nuclear egress complex (NEC) subunits UL50 and UL53. Redistributes the host nuclear lamina by phosphorylating cellular Lamins-A/C. Plays a role in viral DNA synthesis by phosphorylating the DNA polymerase processivity factor UL44. Stimulates host cell cycle to support viral DNA synthesis by phosphorylating host retinoblastoma/RB1 protein. Additional substrates have been identified including host EF1D or H2B. Also phosphorylates host SAMHD1 and thereby counteracts its antiviral effect by reducing its dNTP hydrolase activity. This chain is Serine/threonine protein kinase UL97 (UL97), found in Human cytomegalovirus (strain AD169) (HHV-5).